Consider the following 515-residue polypeptide: GMP synthase [glutamine-hydrolyzing] (515 aa).

Positions 10-200 (TIIVLDFGSQ…VFGVCGCSEG (191 aa)) constitute a Glutamine amidotransferase type-1 domain. The Nucleophile role is filled by Cys87. Active-site residues include His174 and Glu176. Residues 201-390 (WNMENFIEVE…LGIPDEIVWR (190 aa)) form the GMPS ATP-PPase domain. 228–234 (SGGVDSS) is an ATP binding site.

Homodimer.

It carries out the reaction XMP + L-glutamine + ATP + H2O = GMP + L-glutamate + AMP + diphosphate + 2 H(+). The protein operates within purine metabolism; GMP biosynthesis; GMP from XMP (L-Gln route): step 1/1. Functionally, catalyzes the synthesis of GMP from XMP. This chain is GMP synthase [glutamine-hydrolyzing], found in Bacillus cereus (strain ATCC 14579 / DSM 31 / CCUG 7414 / JCM 2152 / NBRC 15305 / NCIMB 9373 / NCTC 2599 / NRRL B-3711).